The primary structure comprises 453 residues: Ethanolamine ammonia-lyase large subunit (453 aa).

Substrate-binding positions include 160 to 162 and asparagine 193; that span reads RLQ. Adenosylcob(III)alamin-binding residues include proline 194 and glutamine 246. Glutamate 287 is a substrate binding site. Adenosylcob(III)alamin is bound at residue serine 295. Substrate is bound at residue aspartate 362. Methionine 401 lines the adenosylcob(III)alamin pocket.

Belongs to the EutB family. In terms of assembly, the basic unit is a heterodimer which dimerizes to form tetramers. The heterotetramers trimerize; 6 large subunits form a core ring with 6 small subunits projecting outwards. It depends on adenosylcob(III)alamin as a cofactor.

It localises to the bacterial microcompartment. It carries out the reaction ethanolamine = acetaldehyde + NH4(+). It functions in the pathway amine and polyamine degradation; ethanolamine degradation. Functionally, catalyzes the deamination of various vicinal amino-alcohols to oxo compounds. It is spontaneously inactivated by its substrate and reactivated by EutA. May play a role in BMC assembly or maintenance. Expression of the eut operon allows this bacteria to use ethanolamine (EA) as a carbon, nitrogen and energy source. It relies on cobalamin (vitamin B12) both as a cofactor for the ethanolamine ammonia-lyase activity and to induce the operon. EA enhances bacterial survival in macrophages in a concentration-dependent manner, suggesting it is an important nutrient during infection. This Salmonella typhimurium (strain LT2 / SGSC1412 / ATCC 700720) protein is Ethanolamine ammonia-lyase large subunit.